Consider the following 283-residue polypeptide: NFU1 iron-sulfur cluster scaffold homolog, mitochondrial (283 aa).

The transit peptide at 1–65 directs the protein to the mitochondrion; that stretch reads MSKFLSQAAI…ELRMPVACRR (65 aa). Residues 182-250 are nifU; the sequence is IKELLDTRIR…IPEVESVEQV (69 aa). [4Fe-4S] cluster-binding residues include Cys219 and Cys222.

The protein belongs to the NifU family.

The protein localises to the mitochondrion. In terms of biological role, molecular scaffold for [Fe-S] cluster assembly of mitochondrial iron-sulfur proteins. The polypeptide is NFU1 iron-sulfur cluster scaffold homolog, mitochondrial (Drosophila simulans (Fruit fly)).